A 157-amino-acid chain; its full sequence is Ribosome-binding factor A (157 aa).

The disordered stretch occupies residues 126-157; the sequence is RARATAQYAGDADPYKHDDEPSDDFEDDSDEE. The segment covering 145-157 has biased composition (acidic residues); the sequence is EPSDDFEDDSDEE.

It belongs to the RbfA family. Monomer. Binds 30S ribosomal subunits, but not 50S ribosomal subunits or 70S ribosomes.

The protein localises to the cytoplasm. Its function is as follows. One of several proteins that assist in the late maturation steps of the functional core of the 30S ribosomal subunit. Associates with free 30S ribosomal subunits (but not with 30S subunits that are part of 70S ribosomes or polysomes). Required for efficient processing of 16S rRNA. May interact with the 5'-terminal helix region of 16S rRNA. This is Ribosome-binding factor A from Bifidobacterium longum (strain DJO10A).